The following is a 179-amino-acid chain: Large ribosomal subunit protein uL5 (179 aa).

It belongs to the universal ribosomal protein uL5 family. Part of the 50S ribosomal subunit; part of the 5S rRNA/L5/L18/L25 subcomplex. Contacts the 5S rRNA and the P site tRNA. Forms a bridge to the 30S subunit in the 70S ribosome.

Functionally, this is one of the proteins that bind and probably mediate the attachment of the 5S RNA into the large ribosomal subunit, where it forms part of the central protuberance. In the 70S ribosome it contacts protein S13 of the 30S subunit (bridge B1b), connecting the 2 subunits; this bridge is implicated in subunit movement. Contacts the P site tRNA; the 5S rRNA and some of its associated proteins might help stabilize positioning of ribosome-bound tRNAs. The chain is Large ribosomal subunit protein uL5 from Proteus mirabilis (strain HI4320).